We begin with the raw amino-acid sequence, 957 residues long: Glycine dehydrogenase (decarboxylating) (957 aa).

An N6-(pyridoxal phosphate)lysine modification is found at K708.

Belongs to the GcvP family. The glycine cleavage system is composed of four proteins: P, T, L and H. Pyridoxal 5'-phosphate is required as a cofactor.

It catalyses the reaction N(6)-[(R)-lipoyl]-L-lysyl-[glycine-cleavage complex H protein] + glycine + H(+) = N(6)-[(R)-S(8)-aminomethyldihydrolipoyl]-L-lysyl-[glycine-cleavage complex H protein] + CO2. In terms of biological role, the glycine cleavage system catalyzes the degradation of glycine. The P protein binds the alpha-amino group of glycine through its pyridoxal phosphate cofactor; CO(2) is released and the remaining methylamine moiety is then transferred to the lipoamide cofactor of the H protein. The protein is Glycine dehydrogenase (decarboxylating) of Escherichia fergusonii (strain ATCC 35469 / DSM 13698 / CCUG 18766 / IAM 14443 / JCM 21226 / LMG 7866 / NBRC 102419 / NCTC 12128 / CDC 0568-73).